We begin with the raw amino-acid sequence, 182 residues long: Small ribosomal subunit protein uS4c (182 aa).

An S4 RNA-binding domain is found at 82–143 (MRLDNILFRL…KQRSKALIQN (62 aa)).

The protein belongs to the universal ribosomal protein uS4 family. As to quaternary structure, part of the 30S ribosomal subunit. Contacts protein S5. The interaction surface between S4 and S5 is involved in control of translational fidelity.

Its subcellular location is the plastid. It localises to the chloroplast. One of the primary rRNA binding proteins, it binds directly to 16S rRNA where it nucleates assembly of the body of the 30S subunit. Its function is as follows. With S5 and S12 plays an important role in translational accuracy. This chain is Small ribosomal subunit protein uS4c (rps4), found in Isophysis tasmanica.